Consider the following 630-residue polypeptide: tRNA uridine 5-carboxymethylaminomethyl modification enzyme MnmG (630 aa).

FAD-binding positions include 14–19, V126, and S181; that span reads GAGHAG. 273–287 contacts NAD(+); sequence GPRYCPSIEDKVVRF. FAD is bound at residue Q370.

Belongs to the MnmG family. As to quaternary structure, homodimer. Heterotetramer of two MnmE and two MnmG subunits. FAD is required as a cofactor.

It localises to the cytoplasm. In terms of biological role, NAD-binding protein involved in the addition of a carboxymethylaminomethyl (cmnm) group at the wobble position (U34) of certain tRNAs, forming tRNA-cmnm(5)s(2)U34. This chain is tRNA uridine 5-carboxymethylaminomethyl modification enzyme MnmG, found in Alkaliphilus metalliredigens (strain QYMF).